A 209-amino-acid polypeptide reads, in one-letter code: Large ribosomal subunit protein uL3 (209 aa).

This sequence belongs to the universal ribosomal protein uL3 family. As to quaternary structure, part of the 50S ribosomal subunit. Forms a cluster with proteins L14 and L19.

Functionally, one of the primary rRNA binding proteins, it binds directly near the 3'-end of the 23S rRNA, where it nucleates assembly of the 50S subunit. In Lactiplantibacillus plantarum (strain ATCC BAA-793 / NCIMB 8826 / WCFS1) (Lactobacillus plantarum), this protein is Large ribosomal subunit protein uL3.